A 711-amino-acid chain; its full sequence is Nuclear intron maturase 1, mitochondrial (711 aa).

Positions 147-459 (KDKISMNGGE…RGIQFLDHII (313 aa)) constitute a Reverse transcriptase domain. An intron maturase type-2 region spans residues 484–653 (GTLLSVSASL…QVLQEYIRLQ (170 aa)).

It belongs to the plant nuclear intron maturase (nMat) family. As to expression, expressed at low levels in seedlings and accumulates in adult plants.

It localises to the mitochondrion. In terms of biological role, nuclear-encoded maturase required for splicing of group-II introns in mitochondria. Necessary for mitochondrial biogenesis during early developmental stages. Involved in the splicing of mitochondrial NAD4 transcripts. Required for trans-splicing of NAD1 intron 1 and also functions in cis-splicing of NAD2 intron 1 and NAD4 intron 2. Required for the regulation of fundamental metabolic pathways such as amino acid metabolism, triacylglycerol degradation and polysaccharide synthesis (cellulose and starch) during the early stage of plant growth. Implicated in stress responses. The chain is Nuclear intron maturase 1, mitochondrial from Arabidopsis thaliana (Mouse-ear cress).